Here is a 447-residue protein sequence, read N- to C-terminus: ATP-dependent protease ATPase subunit HslU (447 aa).

ATP contacts are provided by residues I18, 60 to 65 (GVGKTE), D259, E325, and R397.

It belongs to the ClpX chaperone family. HslU subfamily. A double ring-shaped homohexamer of HslV is capped on each side by a ring-shaped HslU homohexamer. The assembly of the HslU/HslV complex is dependent on binding of ATP.

Its subcellular location is the cytoplasm. In terms of biological role, ATPase subunit of a proteasome-like degradation complex; this subunit has chaperone activity. The binding of ATP and its subsequent hydrolysis by HslU are essential for unfolding of protein substrates subsequently hydrolyzed by HslV. HslU recognizes the N-terminal part of its protein substrates and unfolds these before they are guided to HslV for hydrolysis. The protein is ATP-dependent protease ATPase subunit HslU of Burkholderia pseudomallei (strain 668).